A 248-amino-acid chain; its full sequence is 14-3-3-like protein G-BOX factor 14 lambda (248 aa).

Residues serine 70, serine 112, and serine 193 each carry the phosphoserine; by CRPK1 modification. At threonine 214 the chain carries Phosphothreonine; by CRPK1.

It belongs to the 14-3-3 family. Interacts with SERK1 in the cell membrane. Component of the SERK1 signaling complex, composed of KAPP, CDC48A, GRF6 or GRF7, SERK1, SERK2, SERK3/BAK1 and BRI1. Interacts with TPK1. Interacts with ADF1. Binds to CRPK1 at the plasma membrane. Interacts with DREB1A and DREB1B in the nucleus when activated by CRPK1-mediated phosphorylation upon freezing. Interacts with CINV1. Binds to the N-terminal region of B1L. Transphosphorylated by SERK1. In terms of processing, phosphorylated by CRPK1 in response to cold.

Its subcellular location is the nucleus. The protein resides in the cell membrane. It localises to the cytoplasm. Functionally, is associated with a DNA binding complex that binds to the G box, a well-characterized cis-acting DNA regulatory element found in plant genes. Specific negative regulator of slow-vacuolar (SV) ion channel. Mediates F-actin dynamics possibly through inhibiting ADF1 phosphorylation. Negative regulator of freezing tolerance that modulates cold-responsive C-repeat-binding factors (CBF) DREB1A and DREB1B proteins stability by facilitating their ubiquitin-mediated degradation when activated by CRPK1-mediated phosphorylation in freezing conditions; this processus is counteracted by B1L. This is 14-3-3-like protein G-BOX factor 14 lambda from Arabidopsis thaliana (Mouse-ear cress).